The sequence spans 260 residues: Indole-3-glycerol phosphate synthase (260 aa).

This sequence belongs to the TrpC family.

The enzyme catalyses 1-(2-carboxyphenylamino)-1-deoxy-D-ribulose 5-phosphate + H(+) = (1S,2R)-1-C-(indol-3-yl)glycerol 3-phosphate + CO2 + H2O. Its pathway is amino-acid biosynthesis; L-tryptophan biosynthesis; L-tryptophan from chorismate: step 4/5. The chain is Indole-3-glycerol phosphate synthase from Acetivibrio thermocellus (strain ATCC 27405 / DSM 1237 / JCM 9322 / NBRC 103400 / NCIMB 10682 / NRRL B-4536 / VPI 7372) (Clostridium thermocellum).